The following is a 284-amino-acid chain: Malonyl-[acyl-carrier protein] O-methyltransferase (284 aa).

Belongs to the methyltransferase superfamily.

It carries out the reaction malonyl-[ACP] + S-adenosyl-L-methionine = malonyl-[ACP] methyl ester + S-adenosyl-L-homocysteine. It participates in cofactor biosynthesis; biotin biosynthesis. Its function is as follows. Converts the free carboxyl group of a malonyl-thioester to its methyl ester by transfer of a methyl group from S-adenosyl-L-methionine (SAM). It allows to synthesize pimeloyl-ACP via the fatty acid synthetic pathway. The polypeptide is Malonyl-[acyl-carrier protein] O-methyltransferase (Legionella pneumophila subsp. pneumophila (strain Philadelphia 1 / ATCC 33152 / DSM 7513)).